A 254-amino-acid chain; its full sequence is tRNA (guanine-N(7)-)-methyltransferase (254 aa).

The tract at residues 1 to 34 (MNTNTPAHPPEGAPLSEATQAALASAEHAPDSPG) is disordered. Positions 87, 112, 139, and 162 each coordinate S-adenosyl-L-methionine. Residue aspartate 162 is part of the active site. Residues lysine 166, aspartate 198, and 233–236 (TKFE) each bind substrate.

This sequence belongs to the class I-like SAM-binding methyltransferase superfamily. TrmB family.

It carries out the reaction guanosine(46) in tRNA + S-adenosyl-L-methionine = N(7)-methylguanosine(46) in tRNA + S-adenosyl-L-homocysteine. It participates in tRNA modification; N(7)-methylguanine-tRNA biosynthesis. Its function is as follows. Catalyzes the formation of N(7)-methylguanine at position 46 (m7G46) in tRNA. In Bordetella bronchiseptica (strain ATCC BAA-588 / NCTC 13252 / RB50) (Alcaligenes bronchisepticus), this protein is tRNA (guanine-N(7)-)-methyltransferase.